The sequence spans 577 residues: Proline--tRNA ligase (577 aa).

The protein belongs to the class-II aminoacyl-tRNA synthetase family. ProS type 1 subfamily. Homodimer.

Its subcellular location is the cytoplasm. It carries out the reaction tRNA(Pro) + L-proline + ATP = L-prolyl-tRNA(Pro) + AMP + diphosphate. Catalyzes the attachment of proline to tRNA(Pro) in a two-step reaction: proline is first activated by ATP to form Pro-AMP and then transferred to the acceptor end of tRNA(Pro). As ProRS can inadvertently accommodate and process non-cognate amino acids such as alanine and cysteine, to avoid such errors it has two additional distinct editing activities against alanine. One activity is designated as 'pretransfer' editing and involves the tRNA(Pro)-independent hydrolysis of activated Ala-AMP. The other activity is designated 'posttransfer' editing and involves deacylation of mischarged Ala-tRNA(Pro). The misacylated Cys-tRNA(Pro) is not edited by ProRS. The protein is Proline--tRNA ligase of Chlamydia caviae (strain ATCC VR-813 / DSM 19441 / 03DC25 / GPIC) (Chlamydophila caviae).